We begin with the raw amino-acid sequence, 954 residues long: Kinesin-like protein KIN-7A (954 aa).

Residues 1–29 are disordered; that stretch reads MGVSRPPSTPASKIERTPMSTPTPGGSTR. The segment covering 17-28 has biased composition (low complexity); sequence TPMSTPTPGGST. The region spanning 34 to 354 is the Kinesin motor domain; it reads KIFVTVRVRP…LFFATCAKEV (321 aa). 119 to 126 is an ATP binding site; sequence GQTSSGKT. 2 coiled-coil regions span residues 363-436 and 480-588; these read VVSD…GDNQ and LKHE…LVMS. Disordered regions lie at residues 624 to 689 and 741 to 762; these read PNLI…SSVN and GKTN…DGPD. The span at 630-639 shows a compositional bias: low complexity; sequence PCSPLSSSRP. Basic and acidic residues-rich tracts occupy residues 640–660 and 666–681; these read LEPE…EGSE and KSED…ETPR.

Belongs to the TRAFAC class myosin-kinesin ATPase superfamily. Kinesin family. KIN-7 subfamily. In terms of tissue distribution, ubiquitous with a preferential expression in the shoot apical meristem (SAM).

Its function is as follows. May be essential to promote the progression of cytokinesis during node-internode differentiation. The chain is Kinesin-like protein KIN-7A from Oryza sativa subsp. japonica (Rice).